We begin with the raw amino-acid sequence, 125 residues long: Histone H2B (125 aa).

Residues 1–32 are disordered; the sequence is MAPKVRAAKKGEKRVGKAKSGTAETAKRRRGK. The O-linked (GlcNAc) serine glycan is linked to S112. K120 participates in a covalent cross-link: Glycyl lysine isopeptide (Lys-Gly) (interchain with G-Cter in ubiquitin).

It belongs to the histone H2B family. As to quaternary structure, the nucleosome is a histone octamer containing two molecules each of H2A, H2B, H3 and H4 assembled in one H3-H4 heterotetramer and two H2A-H2B heterodimers. The octamer wraps approximately 147 bp of DNA. Monoubiquitination of Lys-120 gives a specific tag for epigenetic transcriptional activation and is also prerequisite for histone H3 'Lys-4' and 'Lys-79' methylation. Post-translationally, glcNAcylation at Ser-112 promotes monoubiquitination of Lys-120. It fluctuates in response to extracellular glucose, and associates with transcribed genes.

It localises to the nucleus. The protein localises to the chromosome. In terms of biological role, core component of nucleosome. Nucleosomes wrap and compact DNA into chromatin, limiting DNA accessibility to the cellular machineries which require DNA as a template. Histones thereby play a central role in transcription regulation, DNA repair, DNA replication and chromosomal stability. DNA accessibility is regulated via a complex set of post-translational modifications of histones, also called histone code, and nucleosome remodeling. The sequence is that of Histone H2B from Acropora formosa (Staghorn coral).